Reading from the N-terminus, the 303-residue chain is UDP-3-O-acyl-N-acetylglucosamine deacetylase (303 aa).

Zn(2+) contacts are provided by histidine 78, histidine 237, and aspartate 241. The active-site Proton donor is the histidine 264.

The protein belongs to the LpxC family. Requires Zn(2+) as cofactor.

The catalysed reaction is a UDP-3-O-[(3R)-3-hydroxyacyl]-N-acetyl-alpha-D-glucosamine + H2O = a UDP-3-O-[(3R)-3-hydroxyacyl]-alpha-D-glucosamine + acetate. Its pathway is glycolipid biosynthesis; lipid IV(A) biosynthesis; lipid IV(A) from (3R)-3-hydroxytetradecanoyl-[acyl-carrier-protein] and UDP-N-acetyl-alpha-D-glucosamine: step 2/6. In terms of biological role, catalyzes the hydrolysis of UDP-3-O-myristoyl-N-acetylglucosamine to form UDP-3-O-myristoylglucosamine and acetate, the committed step in lipid A biosynthesis. The chain is UDP-3-O-acyl-N-acetylglucosamine deacetylase from Pseudomonas putida (strain GB-1).